We begin with the raw amino-acid sequence, 61 residues long: uncharacterized protein (61 aa).

This is an uncharacterized protein from Haemophilus influenzae (Bacteriophage HP1).